The sequence spans 493 residues: Involucrin (493 aa).

Disordered regions lie at residues 1 to 47 (MSQQ…CQKV), 60 to 123 (EEKH…GQLE), and 139 to 493 (KRDE…GQHE). A compositionally biased stretch (low complexity) spans 76-89 (EQQQPQEQELQQQH). Basic and acidic residues-rich tracts occupy residues 90 to 116 (WEQD…REKQ), 139 to 151 (KRDE…KEQL), 161 to 174 (QLKH…HLEL), 184 to 193 (NLEHQEKPLE), and 201 to 213 (QLKH…KPLE). A compositionally biased stretch (polar residues) spans 228 to 240 (QEGQSELPEQQRG). Basic and acidic residues-rich tracts occupy residues 250–270 (GQLK…HEEG), 282–360 (KHLE…HEGQ), 372–386 (KHLE…HPEQ), 411–431 (KHLE…EQLK), and 439–450 (QLKDLEQQERQL). Positions 473-493 (GEVLLPVEQQQQKQEVQGQHE) are enriched in low complexity.

It belongs to the involucrin family. As to quaternary structure, directly or indirectly cross-linked to cornifelin (CNFN). Substrate of transglutaminase. Specific glutamines or lysines are cross-linked to keratins, desmoplakin and to inter involucrin molecules. Keratinocytes of epidermis and other stratified squamous epithelia.

The protein resides in the cytoplasm. Its function is as follows. Part of the insoluble cornified cell envelope (CE) of stratified squamous epithelia. In Saguinus oedipus (Cotton-top tamarin), this protein is Involucrin (IVL).